A 166-amino-acid chain; its full sequence is Large ribosomal subunit protein uL10 (166 aa).

Part of the ribosomal stalk of the 50S ribosomal subunit. The N-terminus interacts with L11 and 23S rRNA to form the base of the stalk. The C-terminus forms an elongated spine to which L12 dimers bind in a sequential fashion forming a pentameric L10(L12)2(L12)2 complex.

Forms part of the ribosomal stalk, playing a central role in the interaction of the ribosome with GTP-bound translation factors (such as IF-2, EF-Tu, EF-G and RF3). The sequence is that of Large ribosomal subunit protein uL10 (rplJ) from Bacillus subtilis (strain 168).